We begin with the raw amino-acid sequence, 375 residues long: Chaperone protein DnaJ (375 aa).

Residues 6–71 (DYYEILGVSR…DKRARYDQYG (66 aa)) enclose the J domain. The CR-type zinc finger occupies 132 to 214 (GTTKKITIPR…CQGSGKVRKQ (83 aa)). 8 residues coordinate Zn(2+): cysteine 145, cysteine 148, cysteine 162, cysteine 165, cysteine 188, cysteine 191, cysteine 202, and cysteine 205. CXXCXGXG motif repeat units follow at residues 145-152 (CDTCNGTG), 162-169 (CPQCNGSG), 188-195 (CDRCGGRG), and 202-209 (CPTCQGSG). The interval 222-243 (PPGVDTGTRLRMPNEGEAGDKG) is disordered.

Belongs to the DnaJ family. In terms of assembly, homodimer. The cofactor is Zn(2+).

It is found in the cytoplasm. Participates actively in the response to hyperosmotic and heat shock by preventing the aggregation of stress-denatured proteins and by disaggregating proteins, also in an autonomous, DnaK-independent fashion. Unfolded proteins bind initially to DnaJ; upon interaction with the DnaJ-bound protein, DnaK hydrolyzes its bound ATP, resulting in the formation of a stable complex. GrpE releases ADP from DnaK; ATP binding to DnaK triggers the release of the substrate protein, thus completing the reaction cycle. Several rounds of ATP-dependent interactions between DnaJ, DnaK and GrpE are required for fully efficient folding. Also involved, together with DnaK and GrpE, in the DNA replication of plasmids through activation of initiation proteins. This chain is Chaperone protein DnaJ, found in Halothermothrix orenii (strain H 168 / OCM 544 / DSM 9562).